A 756-amino-acid polypeptide reads, in one-letter code: Protease KEX1 (756 aa).

Positions 1-24 (MILSSQLMLALIAVSGYGKAMQVP) are cleaved as a signal peptide. N-linked (GlcNAc...) asparagine glycosylation is found at Asn121, Asn144, and Asn152. One can recognise a Peptidase S8 domain in the interval 130-440 (QWHLINPNYP…FGKLDAYNIV (311 aa)). Catalysis depends on charge relay system residues Asp164 and His202. Intrachain disulfides connect Cys218/Cys365 and Cys310/Cys340. Residue Ser373 is the Charge relay system of the active site. Asn392 and Asn538 each carry an N-linked (GlcNAc...) asparagine glycan. The P/Homo B domain maps to 449-583 (VNPQGWLYLP…RLKMFGETID (135 aa)). Residues 599 to 632 (AEVKSTESKTTTPTAQTSSFTTTSGEETSGANKL) form a disordered region. Over residues 606 to 628 (SKTTTPTAQTSSFTTTSGEETSG) the composition is skewed to low complexity. The chain crosses the membrane as a helical span at residues 641–661 (LYLAIFVIGAIVIIIYYLFFL). The disordered stretch occupies residues 715-756 (EEELSPRESSSNNPFGNESLESFDNSPDHTSNLLGQNSIPNK). Residues 721 to 756 (RESSSNNPFGNESLESFDNSPDHTSNLLGQNSIPNK) show a composition bias toward polar residues.

This sequence belongs to the peptidase S8 family. Furin subfamily. Requires Ca(2+) as cofactor.

It is found in the membrane. Its function is as follows. Probably involved in the processing of the precursor of m1-toxin and alpha-factor. This Kluyveromyces lactis (strain ATCC 8585 / CBS 2359 / DSM 70799 / NBRC 1267 / NRRL Y-1140 / WM37) (Yeast) protein is Protease KEX1 (KEX1).